A 90-amino-acid chain; its full sequence is Probable Fe(2+)-trafficking protein (90 aa).

This sequence belongs to the Fe(2+)-trafficking protein family.

In terms of biological role, could be a mediator in iron transactions between iron acquisition and iron-requiring processes, such as synthesis and/or repair of Fe-S clusters in biosynthetic enzymes. This Cupriavidus necator (strain ATCC 17699 / DSM 428 / KCTC 22496 / NCIMB 10442 / H16 / Stanier 337) (Ralstonia eutropha) protein is Probable Fe(2+)-trafficking protein.